Consider the following 189-residue polypeptide: Small ribosomal subunit protein uS5 (189 aa).

The S5 DRBM domain occupies 22–85 (FVDKLVAINR…EAAKRELIFV (64 aa)).

The protein belongs to the universal ribosomal protein uS5 family. In terms of assembly, part of the 30S ribosomal subunit. Contacts proteins S4 and S8.

With S4 and S12 plays an important role in translational accuracy. Functionally, located at the back of the 30S subunit body where it stabilizes the conformation of the head with respect to the body. The sequence is that of Small ribosomal subunit protein uS5 from Rhizobium etli (strain CIAT 652).